The sequence spans 428 residues: Stromal membrane-associated protein 2 (428 aa).

Residues 13-139 enclose the Arf-GAP domain; that stretch reads QAVLANLLLE…INVLRKEKDD (127 aa). Residues 28 to 51 form a C4-type zinc finger; sequence CADCQSKGPRWASWNIGVFICIRC. Phosphoserine occurs at positions 127, 219, 224, 230, and 239. The interaction with clathrin heavy chains stretch occupies residues 163-231; the sequence is MPQKKEDAQL…SVSRKAVGSM (69 aa). Residues 218–262 form a disordered region; it reads PSPSSVSRKAVGSMPTAGSAGSVPENLNLFPEPGSKSEETGKKQL. The span at 252–262 shows a compositional bias: basic and acidic residues; that stretch reads SKSEETGKKQL. Residues 339–428 are interaction with PICALM; the sequence is MGGMQASMMG…NQTLSPQMWK (90 aa).

In terms of assembly, interacts with ARF1. Interacts with PICALM and clathrin heavy chains.

The protein resides in the cytoplasm. In terms of biological role, GTPase activating protein that acts on ARF1. Can also activate ARF6 (in vitro). May play a role in clathrin-dependent retrograde transport from early endosomes to the trans-Golgi network. The chain is Stromal membrane-associated protein 2 (Smap2) from Mus musculus (Mouse).